A 419-amino-acid chain; its full sequence is Serine--tRNA ligase (419 aa).

An L-serine-binding site is contributed by 226–228 (TSE). ATP contacts are provided by residues 257-259 (RRE) and Val-273. Residue Glu-280 coordinates L-serine. Residue 344-347 (ELTS) participates in ATP binding. Residue Thr-379 participates in L-serine binding.

Belongs to the class-II aminoacyl-tRNA synthetase family. Type-1 seryl-tRNA synthetase subfamily. Homodimer. The tRNA molecule binds across the dimer.

The protein resides in the cytoplasm. The enzyme catalyses tRNA(Ser) + L-serine + ATP = L-seryl-tRNA(Ser) + AMP + diphosphate + H(+). It carries out the reaction tRNA(Sec) + L-serine + ATP = L-seryl-tRNA(Sec) + AMP + diphosphate + H(+). Its pathway is aminoacyl-tRNA biosynthesis; selenocysteinyl-tRNA(Sec) biosynthesis; L-seryl-tRNA(Sec) from L-serine and tRNA(Sec): step 1/1. In terms of biological role, catalyzes the attachment of serine to tRNA(Ser). Is also able to aminoacylate tRNA(Sec) with serine, to form the misacylated tRNA L-seryl-tRNA(Sec), which will be further converted into selenocysteinyl-tRNA(Sec). This Corynebacterium diphtheriae (strain ATCC 700971 / NCTC 13129 / Biotype gravis) protein is Serine--tRNA ligase.